The primary structure comprises 414 residues: COUP transcription factor 2 (414 aa).

Positions 1–72 (MAMVVSTWRD…PGGPGSDKQQ (72 aa)) are disordered. Over residues 27–37 (PPVPGPPPGAP) the composition is skewed to pro residues. Low complexity predominate over residues 38 to 57 (HTPQTPGQGGPASTPAQTAA). Phosphothreonine is present on threonine 51. Over residues 58–67 (GGQGGPGGPG) the composition is skewed to gly residues. The segment at residues 76 to 151 (HIECVVCGDK…VGMRREAVQR (76 aa)) is a DNA-binding region (nuclear receptor). 2 NR C4-type zinc fingers span residues 79-99 (CVVCGDKSSGKHYGQFTCEGC) and 115-139 (CRANRNCPIDQHHRNQCQYCRLKKC). The segment at 117-414 (ANRNCPIDQH…SFNWPYMAIQ (298 aa)) is interaction with ZFPM2. Residues 177–403 (YLSGYISLLL…TLIRDMLLSG (227 aa)) form the NR LBD domain. An important for dimerization region spans residues 337–414 (LQEKSQCALE…SFNWPYMAIQ (78 aa)).

Belongs to the nuclear hormone receptor family. NR2 subfamily. In terms of assembly, interacts with SQSTM1. Binds DNA as a dimer; homodimer or heterodimer with NR2F6. Interacts with NCOA1, NCOA2, NCOA3 and PPARGC1A. Interacts with ZFPM2.

It is found in the nucleus. Ligand-activated transcription factor. Activated by high concentrations of 9-cis-retinoic acid and all-trans-retinoic acid, but not by dexamethasone, cortisol or progesterone (in vitro). Regulation of the apolipoprotein A-I gene transcription. Binds to DNA site A. May be required to establish ovary identity during early gonad development. The protein is COUP transcription factor 2 (NR2F2) of Bos taurus (Bovine).